Reading from the N-terminus, the 194-residue chain is dCTP deaminase (194 aa).

DCTP-binding positions include 110–115 (RSSLAR), aspartate 128, 136–138 (VLE), tyrosine 171, lysine 178, and glutamine 182. The Proton donor/acceptor role is filled by glutamate 138.

This sequence belongs to the dCTP deaminase family. In terms of assembly, homotrimer.

It catalyses the reaction dCTP + H2O + H(+) = dUTP + NH4(+). It participates in pyrimidine metabolism; dUMP biosynthesis; dUMP from dCTP (dUTP route): step 1/2. In terms of biological role, catalyzes the deamination of dCTP to dUTP. This is dCTP deaminase from Pasteurella multocida (strain Pm70).